We begin with the raw amino-acid sequence, 130 residues long: Small ribosomal subunit protein uS9 (130 aa).

This sequence belongs to the universal ribosomal protein uS9 family.

This Streptococcus suis (strain 98HAH33) protein is Small ribosomal subunit protein uS9.